The primary structure comprises 310 residues: Probable deoxyhypusine synthase (310 aa).

Residue Lys-284 is the Nucleophile of the active site.

Belongs to the deoxyhypusine synthase family. The cofactor is NAD(+).

The catalysed reaction is [eIF5A protein]-L-lysine + spermidine = [eIF5A protein]-deoxyhypusine + propane-1,3-diamine. Its pathway is protein modification; eIF5A hypusination. Its function is as follows. Catalyzes the NAD-dependent oxidative cleavage of spermidine and the subsequent transfer of the butylamine moiety of spermidine to the epsilon-amino group of a specific lysine residue of the eIF-5A precursor protein to form the intermediate deoxyhypusine residue. The polypeptide is Probable deoxyhypusine synthase (dys) (Thermoplasma volcanium (strain ATCC 51530 / DSM 4299 / JCM 9571 / NBRC 15438 / GSS1)).